A 456-amino-acid polypeptide reads, in one-letter code: Phytase A (456 aa).

A signal peptide spans 1-24; it reads MSSMASVLFAALAISGVQVTPSRG. 1D-myo-inositol hexakisphosphate-binding residues include glutamine 37, tyrosine 38, arginine 68, histidine 69, arginine 72, threonine 75, and arginine 152. 4 disulfides stabilise this stretch: cysteine 58/cysteine 396, cysteine 197/cysteine 450, cysteine 246/cysteine 264, and cysteine 421/cysteine 429. Histidine 69 serves as the catalytic Nucleophile. Lysine 283 serves as a coordination point for 1D-myo-inositol hexakisphosphate. Asparagine 317 carries N-linked (GlcNAc...) asparagine glycosylation. 2 residues coordinate 1D-myo-inositol hexakisphosphate: histidine 343 and aspartate 344. N-linked (GlcNAc...) asparagine glycosylation is present at asparagine 358.

The protein belongs to the histidine acid phosphatase family. In terms of assembly, monomer.

It is found in the secreted. The enzyme catalyses 1D-myo-inositol hexakisphosphate + H2O = 1D-myo-inositol 1,2,4,5,6-pentakisphosphate + phosphate. It catalyses the reaction 1D-myo-inositol 1,2,4,5,6-pentakisphosphate + H2O = 1D-myo-inositol 1,2,5,6-tetrakisphosphate + phosphate. The catalysed reaction is 1D-myo-inositol 1,2,5,6-tetrakisphosphate + H2O = 1D-myo-inositol 1,2,6-trisphosphate + phosphate. It carries out the reaction 1D-myo-inositol 1,2,6-trisphosphate + H2O = 1D-myo-inositol 1,2-bisphosphate + phosphate. The enzyme catalyses 1D-myo-inositol 1,2-bisphosphate + H2O = 1D-myo-inositol 2-phosphate + phosphate. Functionally, catalyzes the phosphate monoester hydrolysis of phytic acid (myo-inositol hexakisphosphate), which results in the stepwise formation of myo-inositol pentakis-, tetrakis-, tris-, bis-, and monophosphates, as well as the liberation of inorganic phosphate. Myo-inositol 2-monophosphate is the end product. This chain is Phytase A, found in Arthroderma benhamiae (strain ATCC MYA-4681 / CBS 112371) (Trichophyton mentagrophytes).